We begin with the raw amino-acid sequence, 137 residues long: Large ribosomal subunit protein uL16 (137 aa).

This sequence belongs to the universal ribosomal protein uL16 family. As to quaternary structure, part of the 50S ribosomal subunit.

Binds 23S rRNA and is also seen to make contacts with the A and possibly P site tRNAs. This is Large ribosomal subunit protein uL16 from Tolumonas auensis (strain DSM 9187 / NBRC 110442 / TA 4).